Consider the following 297-residue polypeptide: Glycosylphosphatidylinositol anchor biosynthesis protein 11 (297 aa).

Residues 1-18 (MTSASPSPLRAANAASSA) are compositionally biased toward low complexity. The interval 1-26 (MTSASPSPLRAANAASSAPVPPPAMK) is disordered. 2 consecutive transmembrane segments (helical) span residues 44 to 64 (SFVHPAALLAILATRFQALVA) and 76 to 96 (FLALLQVTYVMVCLPPAGSVL). Residues 97–140 (PSPPASPVSDGDEKEKEKEKEKEKEKEKRKLPLRAGKLPRKKNQ) are disordered. Residues 107 to 126 (GDEKEKEKEKEKEKEKEKRK) show a composition bias toward basic and acidic residues. Over residues 127 to 140 (LPLRAGKLPRKKNQ) the composition is skewed to basic residues. N-linked (GlcNAc...) asparagine glycosylation is present at asparagine 139. Transmembrane regions (helical) follow at residues 157 to 177 (LILTFLLATPVLSLLLVLFGA), 187 to 207 (VLCAAHMALLASTALIYVHGV), 225 to 245 (VWGGALGTALGAWFGAVPIPL), and 253 to 273 (AFPITILTGAYFGFAVGSVVC).

Belongs to the PIGF family.

It is found in the endoplasmic reticulum membrane. It functions in the pathway glycolipid biosynthesis; glycosylphosphatidylinositol-anchor biosynthesis. Its function is as follows. Acts in the GPI biosynthetic pathway between GlcNAc-PI synthesis and GPI transfer to protein. The protein is Glycosylphosphatidylinositol anchor biosynthesis protein 11 (gpi11) of Aspergillus fumigatus (strain ATCC MYA-4609 / CBS 101355 / FGSC A1100 / Af293) (Neosartorya fumigata).